The primary structure comprises 652 residues: Nucleolar GTP-binding protein 1 (652 aa).

In terms of domain architecture, OBG-type G spans 169–341; sequence RTIIICGFPN…VKTEACERLL (173 aa). GTP contacts are provided by residues 175–182, 221–225, and 289–292; these read GFPNVGKS, DTPGI, and NKID. A disordered region spans residues 501 to 521; that stretch reads RLSSRKNKPVIPRNKQPKVRD.

This sequence belongs to the TRAFAC class OBG-HflX-like GTPase superfamily. OBG GTPase family. NOG subfamily.

The protein resides in the nucleus. The protein localises to the nucleolus. Its function is as follows. Involved in the biogenesis of the 60S ribosomal subunit. Required for normal assembly of the mitotic spindle. May be involved in both centrosome-dependent and centrosome-independent spindle assembly programs. Acts as a TP53 repressor, preventing TP53 stabilization and cell cycle arrest. This Drosophila melanogaster (Fruit fly) protein is Nucleolar GTP-binding protein 1.